We begin with the raw amino-acid sequence, 964 residues long: MRNTKASKFSDRHLGLIEEAQVEILNALGHADINDFISSVVPEEILDAQPPDELLPKALNEIEALEELRSIAKKNQIKRSLIGLGYYGTYTPAVIQRHVFENPAWYTSYTPYQAEIAQGRLEALFNFQTLITELTGLPIANASLLDEGTAAAEAMSLSFAVNKQTKARKFIVDDQVLPQTLAVLKTRAEPLELDIEVVNLTDLVINETVFGLLIQLPGKSGQLWDPSSLIAQAHEFNALVTVAIDPLAQVLIAPMGQLGVDIAIGSSQRFGVPIGFGGPHAAFFAIKEEYKRLVPGRLVGQSIDSKGHSALRLALQTREQHIRRDKATSNICTAQALLATIASFYAVYHGPHGLEEIAKNIIYLRSQLELYLKEFGYTFAPDCRFDTLEIHCLEAPEIHRLSILSGFNLRILPLGASIEKSKGFAVSFDELSTTKELYKLCKIFADVKDKNFEPRENTNFNFKESLTSLPLRTTPWLKQQVFNNYRTETELMRYIQKLASRDFSLVNGMIPLGSCTMKLNATAELLPITWKEFSSIHPFVPSDQAKGYGYLSEQLEGWLCALTGFDGVSLQPNAGSQGEFAGLLVIRAWHKAINQADRNICLIPKSAHGTNPASAVMAGFKVVAVECDEYGNIDFEDLVLKVETYSSELGALMITYPSTHGVFEPNIRQICDQVHLHGGQVYLDGANLNAQVGLCRPGAFGADVCHLNLHKTFCIPHGGGGPGIGPIAVAKHLVAFLPSKNFHASDNNAAIGAISASPLGSASILPISWMYIRMMGADGLRQASSLAILSANYIANKLDPYFQVLFKAPNGKVAHECILDLRSIKRITGIEVDDVAKRLMDYGFHAPTISWPVAGTLMIEPTESESFEEINRFCEAMISIRSEIDAIESGITDLSNNPLRLAPHTMETVTAEIWDRPYTRQQAAFPLKDQFMNKFWPAVSRIDNAFGDRNLVCSCSTLEELSET.

K711 carries the post-translational modification N6-(pyridoxal phosphate)lysine.

The protein belongs to the GcvP family. The glycine cleavage system is composed of four proteins: P, T, L and H. Pyridoxal 5'-phosphate serves as cofactor.

The enzyme catalyses N(6)-[(R)-lipoyl]-L-lysyl-[glycine-cleavage complex H protein] + glycine + H(+) = N(6)-[(R)-S(8)-aminomethyldihydrolipoyl]-L-lysyl-[glycine-cleavage complex H protein] + CO2. In terms of biological role, the glycine cleavage system catalyzes the degradation of glycine. The P protein binds the alpha-amino group of glycine through its pyridoxal phosphate cofactor; CO(2) is released and the remaining methylamine moiety is then transferred to the lipoamide cofactor of the H protein. The chain is Glycine dehydrogenase (decarboxylating) from Prochlorococcus marinus (strain SARG / CCMP1375 / SS120).